A 323-amino-acid chain; its full sequence is tRNA-dihydrouridine(16) synthase (323 aa).

FMN is bound by residues 7 to 9 (PME) and glutamine 68. Catalysis depends on cysteine 98, which acts as the Proton donor. Residues lysine 139, 199-201 (NGE), and 223-224 (GR) each bind FMN.

It belongs to the Dus family. DusC subfamily. Requires FMN as cofactor.

It catalyses the reaction 5,6-dihydrouridine(16) in tRNA + NADP(+) = uridine(16) in tRNA + NADPH + H(+). It carries out the reaction 5,6-dihydrouridine(16) in tRNA + NAD(+) = uridine(16) in tRNA + NADH + H(+). Functionally, catalyzes the synthesis of 5,6-dihydrouridine (D), a modified base found in the D-loop of most tRNAs, via the reduction of the C5-C6 double bond in target uridines. Specifically modifies U16 in tRNAs. This Pseudomonas putida (strain ATCC 47054 / DSM 6125 / CFBP 8728 / NCIMB 11950 / KT2440) protein is tRNA-dihydrouridine(16) synthase.